A 1407-amino-acid chain; its full sequence is Metabotropic glutamate receptor-like protein P (1407 aa).

At 1–696 the chain is on the extracellular side; that stretch reads MKFKKKNIYW…KTIKVTSFVK (696 aa). Residues asparagine 43 and asparagine 58 are each glycosylated (N-linked (GlcNAc...) asparagine). 2 PbH1 repeats span residues 93-118 and 129-150; these read ISDI…FDGG and FVNV…FLYN. N-linked (GlcNAc...) asparagine glycosylation is found at asparagine 162, asparagine 179, asparagine 182, asparagine 230, asparagine 241, asparagine 270, asparagine 368, asparagine 391, asparagine 464, asparagine 512, asparagine 539, asparagine 544, asparagine 554, asparagine 571, asparagine 627, and asparagine 646. One copy of the PbH1 3 repeat lies at 254-279; it reads ISNVIFESCEFIGNRANSTGGLSFLT. One copy of the PbH1 4 repeat lies at 452-476; sequence GYSVYIENCEVKNNTGLFKGCFIDT. The chain crosses the membrane as a helical span at residues 697 to 717; it reads FLVGTLAAILLIILIISGFIS. Topologically, residues 718 to 731 are cytoplasmic; sequence LKYRKKRVIRYSNP. Residues 732–752 form a helical membrane-spanning segment; sequence LFLCIILVGCIIFLITIPVLF. Over 753–758 the chain is Extracellular; the sequence is GSTSAT. Residues 759-779 form a helical membrane-spanning segment; it reads CKIRFPIIVIGSCLVTSSVFI. The Cytoplasmic portion of the chain corresponds to 780–806; that stretch reads KQFRIWRLIKDIQLLRETNVENKYLLK. The helical transmembrane segment at 807–827 threads the bilayer; that stretch reads FISILMVIPIIIVICSFFIFP. Over 828–853 the chain is Extracellular; it reads THEKYTFNQRDITITHYCSDGSYLAY. Residues 854-874 traverse the membrane as a helical segment; it reads VIIFLVYQMAILLFGCYLVIV. At 875–890 the chain is on the cytoplasmic side; that stretch reads CRKFRSIPGTFNEATY. The chain crosses the membrane as a helical span at residues 891–911; the sequence is IGILIYNYTVVLIVAIPLAYV. Over 912 to 919 the chain is Extracellular; it reads FNKNPLAN. A helical transmembrane segment spans residues 920–940; the sequence is FLIFSISIIVFVLSTIILLFI. At 941-1407 the chain is on the cytoplasmic side; the sequence is PKFHFLLRKK…LSPINLSKRK (467 aa). A compositionally biased stretch (polar residues) spans 991–1004; that stretch reads QQRQGNLYNNNSLG. Disordered regions lie at residues 991 to 1072, 1084 to 1248, 1267 to 1351, and 1369 to 1407; these read QQRQ…DPNF, GKRK…SSIG, KKVK…NFNE, and FHQK…SKRK. The segment covering 1005 to 1029 has biased composition (low complexity); it reads RSISSNTRKRSNNNINNNNNNNSFN. Positions 1030 to 1040 are enriched in polar residues; the sequence is MTGFSDSSSTI. The span at 1041 to 1071 shows a compositional bias: low complexity; the sequence is SNPNLTSFTSSPSSLNSSSDSDSTPDFNDPN. Positions 1084 to 1093 are enriched in basic and acidic residues; it reads GKRKSIEKNK. Composition is skewed to low complexity over residues 1099–1147, 1154–1246, and 1276–1339; these read PNSP…NTPI, SSKT…SDSS, and SDST…NNNN. The stretch at 1315-1344 forms a coiled coil; the sequence is NNNNNNNNNNNNNINNNNNNANNNNSDTDD.

The protein belongs to the G-protein coupled receptor 3 family. GABA-B receptor subfamily.

The protein resides in the membrane. The polypeptide is Metabotropic glutamate receptor-like protein P (grlP) (Dictyostelium discoideum (Social amoeba)).